The primary structure comprises 31 residues: Cytochrome b6-f complex subunit 6 (31 aa).

The chain crosses the membrane as a helical span at residues 4-24; it reads ITSYFGFLLAALTITSVLFIG.

The protein belongs to the PetL family. As to quaternary structure, the 4 large subunits of the cytochrome b6-f complex are cytochrome b6, subunit IV (17 kDa polypeptide, PetD), cytochrome f and the Rieske protein, while the 4 small subunits are PetG, PetL, PetM and PetN. The complex functions as a dimer.

It localises to the plastid. The protein localises to the chloroplast thylakoid membrane. In terms of biological role, component of the cytochrome b6-f complex, which mediates electron transfer between photosystem II (PSII) and photosystem I (PSI), cyclic electron flow around PSI, and state transitions. PetL is important for photoautotrophic growth as well as for electron transfer efficiency and stability of the cytochrome b6-f complex. This Arabidopsis thaliana (Mouse-ear cress) protein is Cytochrome b6-f complex subunit 6.